A 417-amino-acid polypeptide reads, in one-letter code: Xylulose 5-phosphate/phosphate translocator, chloroplastic (417 aa).

The transit peptide at 1 to 82 (MISLNLSPSL…GFSRKPRSIA (82 aa)) directs the protein to the chloroplast. Residues 66–102 (TNPESSSGFSRKPRSIAAVGSSDSNPDEKSDLGEAEK) are disordered. Ala-83 bears the N-acetylalanine mark. A compositionally biased stretch (basic and acidic residues) spans 91–102 (PDEKSDLGEAEK). The next 9 helical transmembrane spans lie at 109 to 129 (TLQLGIVFGLWYFQNIVFNIF), 141 to 161 (WLLASFQLFAGSIWMLVLWSF), 173 to 193 (FIIALLGPALFHTIGHISACV), 198 to 218 (VAVSFTHVIKSAEPVFSVIFS), 225 to 245 (YPLAVWLSILPIVMGCSLAAV), 247 to 267 (EVSFNLGGLSGAMISNVGFVL), 287 to 307 (LYGCISILSLLYLFPVAIFVE), 318 to 338 (AIASVGTPSTFYFWVLLSGVF), and 384 to 404 (LNALGSAIAIFGTFLYSQATA). The EamA domain occupies 127-243 (NIFNKKALNV…LPIVMGCSLA (117 aa)).

It belongs to the TPT transporter family. TPT (TC 2.A.7.9) subfamily. As to expression, widely expressed.

Its subcellular location is the plastid. It is found in the chloroplast membrane. Sugar phosphate/phosphate translocator that transports inorganic phosphate, triose phosphate, 3-phosphoglycerate, xylulose 5-phosphate (Xul-5-P) and to a lesser extent ribulose 5-phosphate. Does not transport ribose 5-phosphate or hexose phosphates. Provides cytosolic Xul-5-P to the chloroplast, where it is used as an intermediate in the plastidic pentose phosphate pathways. This is Xylulose 5-phosphate/phosphate translocator, chloroplastic (XPT) from Arabidopsis thaliana (Mouse-ear cress).